We begin with the raw amino-acid sequence, 407 residues long: Methylthioribose kinase (407 aa).

ATP contacts are provided by residues Asn-40, Lys-57, and 111 to 113 (EDL). Position 229 (Asp-229) interacts with substrate. An ATP-binding site is contributed by 246-248 (DAE). Arg-344 contacts substrate.

This sequence belongs to the methylthioribose kinase family. As to quaternary structure, homodimer.

The enzyme catalyses 5-(methylsulfanyl)-D-ribose + ATP = 5-(methylsulfanyl)-alpha-D-ribose 1-phosphate + ADP + H(+). It participates in amino-acid biosynthesis; L-methionine biosynthesis via salvage pathway; S-methyl-5-thio-alpha-D-ribose 1-phosphate from S-methyl-5'-thioadenosine (hydrolase route): step 2/2. Functionally, catalyzes the phosphorylation of methylthioribose into methylthioribose-1-phosphate. The chain is Methylthioribose kinase from Yersinia pestis bv. Antiqua (strain Angola).